The primary structure comprises 640 residues: Replication protein A 70 kDa DNA-binding subunit A (640 aa).

The OB DNA-binding region spans 211-293 (AIKARVTAKG…NHLKNEWEIF (83 aa)). Residues 503 to 529 (CPLMIGDKQCNKKVTRSGTNRWLCDRC) form a C4-type zinc finger.

The protein belongs to the replication factor A protein 1 family. Heterotrimer of RPA1, RPA2 and RPA3 (canonical replication protein A complex). Interacts with RPA2A. In terms of tissue distribution, expressed in roots, leaves, stalks and flower buds.

Its subcellular location is the nucleus. In terms of biological role, component of the replication protein A complex (RPA) required for DNA recombination, repair and replication. The activity of RPA is mediated by single-stranded DNA binding and protein interactions. Plays an essential role at later stages of meiotic recombination events required for the formation of class I crossovers. Is essential for normal progression through meiosis in pollen mother cells. Is involved in repair of double-strand DNA breaks (DSBs) induced by genotoxic stresses, but does not seem to be required for the repair of meiotic DSBs. The chain is Replication protein A 70 kDa DNA-binding subunit A (RPA1A) from Arabidopsis thaliana (Mouse-ear cress).